Consider the following 225-residue polypeptide: NAD(P)H-quinone oxidoreductase subunit K, chloroplastic (225 aa).

Residues Cys43, Cys44, Cys108, and Cys139 each coordinate [4Fe-4S] cluster.

The protein belongs to the complex I 20 kDa subunit family. As to quaternary structure, NDH is composed of at least 16 different subunits, 5 of which are encoded in the nucleus. [4Fe-4S] cluster is required as a cofactor.

It is found in the plastid. The protein resides in the chloroplast thylakoid membrane. The enzyme catalyses a plastoquinone + NADH + (n+1) H(+)(in) = a plastoquinol + NAD(+) + n H(+)(out). It carries out the reaction a plastoquinone + NADPH + (n+1) H(+)(in) = a plastoquinol + NADP(+) + n H(+)(out). Functionally, NDH shuttles electrons from NAD(P)H:plastoquinone, via FMN and iron-sulfur (Fe-S) centers, to quinones in the photosynthetic chain and possibly in a chloroplast respiratory chain. The immediate electron acceptor for the enzyme in this species is believed to be plastoquinone. Couples the redox reaction to proton translocation, and thus conserves the redox energy in a proton gradient. In Illicium oligandrum (Star anise), this protein is NAD(P)H-quinone oxidoreductase subunit K, chloroplastic.